Consider the following 424-residue polypeptide: Vasopressin V1a receptor (424 aa).

A disordered region spans residues 1–40 (MSFPRGSQDRSVGNSSPWWPLTTEGSNGSQEAARLGEGDS). Topologically, residues 1-52 (MSFPRGSQDRSVGNSSPWWPLTTEGSNGSQEAARLGEGDSPLGDVRNEELAK) are extracellular. Residues 9 to 30 (DRSVGNSSPWWPLTTEGSNGSQ) are compositionally biased toward polar residues. N-linked (GlcNAc...) asparagine glycosylation occurs at Asn27. A helical membrane pass occupies residues 53–76 (LEIAVLAVIFVVAVLGNSSVLLAL). Residues 77–88 (HRTPRKTSRMHL) lie on the Cytoplasmic side of the membrane. The helical transmembrane segment at 89-110 (FIRHLSLADLAVAFFQVLPQLC) threads the bilayer. Topologically, residues 111-125 (WDITYRFRGPDWLCR) are extracellular. Cys124 and Cys205 form a disulfide bridge. A helical transmembrane segment spans residues 126–147 (VVKHLQVFAMFASAYMLVVMTA). Over 148–168 (DRYIAVCHPLKTLQQPARRSR) the chain is Cytoplasmic. Residues 169–190 (LMIATSWVLSFILSTPQYFIFS) traverse the membrane as a helical segment. At 191–220 (VIEIEVNNGTKTQDCWATFIQPWGTRAYVT) the chain is on the extracellular side. The chain crosses the membrane as a helical span at residues 221–241 (WMTSGVFVAPVVVLGTCYGFI). The Cytoplasmic segment spans residues 242 to 299 (CYHIWRNIRGKTASSRHSKGDKGSGEAVGPFHKGLLVTPCVSSVKSISRAKIRTVKMT). A helical transmembrane segment spans residues 300–319 (FVIVSAYILCWAPFFIVQMW). Over 320 to 337 (SVWDENFIWTDSENPSIT) the chain is Extracellular. Residues 338-357 (ITALLASLNSCCNPWIYMFF) form a helical membrane-spanning segment. The Cytoplasmic portion of the chain corresponds to 358–424 (SGHLLQDCVQ…KSIRFIPVST (67 aa)). 2 S-palmitoyl cysteine lipidation sites follow: Cys371 and Cys372. Residues 383–416 (DSDSMSRRQTSYSNNRSPTNSTGMWKDSPKSSKS) are disordered. Over residues 389–405 (RRQTSYSNNRSPTNSTG) the composition is skewed to polar residues. At Ser410 the chain carries Phosphoserine.

Belongs to the G-protein coupled receptor 1 family. Vasopressin/oxytocin receptor subfamily. Palmitoylated on three cysteine residues, of which only two are identified. Localized within gonadotropes of the anterior pituitary of the brain. Broadly distributed throughout the cerebral cortex.

It localises to the cell membrane. The protein localises to the cytoplasmic vesicle membrane. Receptor for arginine vasopressin. The activity of this receptor is mediated by G proteins which activate a phosphatidyl-inositol-calcium second messenger system. Involved in social memory formation. This Rattus norvegicus (Rat) protein is Vasopressin V1a receptor (Avpr1a).